A 97-amino-acid chain; its full sequence is Class II hydrophobin 3 (97 aa).

The signal sequence occupies residues 1 to 16 (MKFFAAAALFIAGVLA). 4 cysteine pairs are disulfide-bonded: Cys-30–Cys-79, Cys-40–Cys-70, Cys-41–Cys-53, and Cys-80–Cys-91.

It belongs to the cerato-ulmin hydrophobin family. Homodimer. Homodimers further self-assemble to form highly ordered films at water-air interfaces through intermolecular interactions.

The protein resides in the secreted. It localises to the cell wall. Functionally, aerial growth, conidiation, and dispersal of filamentous fungi in the environment rely upon a capability of their secreting small amphipathic proteins called hydrophobins (HPBs) with low sequence identity. Class I can self-assemble into an outermost layer of rodlet bundles on aerial cell surfaces, conferring cellular hydrophobicity that supports fungal growth, development and dispersal; whereas Class II form highly ordered films at water-air interfaces through intermolecular interactions but contribute nothing to the rodlet structure. In Trichoderma asperellum (strain ATCC 204424 / CBS 433.97 / NBRC 101777), this protein is Class II hydrophobin 3.